The chain runs to 151 residues: Large ribosomal subunit protein bL9 (151 aa).

This sequence belongs to the bacterial ribosomal protein bL9 family.

In terms of biological role, binds to the 23S rRNA. The chain is Large ribosomal subunit protein bL9 from Rhodococcus jostii (strain RHA1).